Here is a 349-residue protein sequence, read N- to C-terminus: S-adenosylmethionine:tRNA ribosyltransferase-isomerase (349 aa).

This sequence belongs to the QueA family. As to quaternary structure, monomer.

It localises to the cytoplasm. It carries out the reaction 7-aminomethyl-7-carbaguanosine(34) in tRNA + S-adenosyl-L-methionine = epoxyqueuosine(34) in tRNA + adenine + L-methionine + 2 H(+). It participates in tRNA modification; tRNA-queuosine biosynthesis. In terms of biological role, transfers and isomerizes the ribose moiety from AdoMet to the 7-aminomethyl group of 7-deazaguanine (preQ1-tRNA) to give epoxyqueuosine (oQ-tRNA). The protein is S-adenosylmethionine:tRNA ribosyltransferase-isomerase of Pseudomonas fluorescens (strain SBW25).